Reading from the N-terminus, the 236-residue chain is Small ribosomal subunit protein uS2c (236 aa).

This sequence belongs to the universal ribosomal protein uS2 family.

Its subcellular location is the plastid. The protein localises to the chloroplast. In Zea mays (Maize), this protein is Small ribosomal subunit protein uS2c (rps2).